The chain runs to 108 residues: MILGQAAETLAQSHLEQQGLTFVERNVRYPFGEIDLVMRHKNHWVFVEVKYRSATQYGGALQAVSKAQIGRIRLAASHYLQIHRLDVPCRFDVVAIEGHQIHWLVDAF.

The protein belongs to the UPF0102 family.

In Shewanella putrefaciens (strain CN-32 / ATCC BAA-453), this protein is UPF0102 protein Sputcn32_3693.